The following is a 660-amino-acid chain: Probable cation-transporting P-type ATPase J (660 aa).

5 consecutive transmembrane segments (helical) span residues 33–53 (WAAL…CGAP), 60–80 (LFLA…LQAL), 94–114 (AAIG…IVIF), 261–281 (IGMV…GETL), and 292–312 (MIVA…LAAI). Asp-340 functions as the 4-aspartylphosphate intermediate in the catalytic mechanism. The Mg(2+) site is built by Asp-544 and Asp-548. A helical transmembrane segment spans residues 598-618 (IVVANLIVAVTFIAGLVVWDL).

It belongs to the cation transport ATPase (P-type) (TC 3.A.3) family. Type IB subfamily.

The protein resides in the cell membrane. It catalyses the reaction ATP + H2O = ADP + phosphate + H(+). The protein is Probable cation-transporting P-type ATPase J (ctpJ) of Mycobacterium tuberculosis (strain CDC 1551 / Oshkosh).